Reading from the N-terminus, the 238-residue chain is Probable metal transport system ATP-binding protein TP_0035 (238 aa).

Positions 10 to 231 (VLLQNVSFRY…LDMQKKDALA (222 aa)) constitute an ABC transporter domain. 44-51 (GENGSGKS) contacts ATP.

This sequence belongs to the ABC transporter superfamily.

It localises to the cell inner membrane. In terms of biological role, part of an ATP-driven transport system TP_0034/TP_0035/TP_0036 for a metal. Probably responsible for energy coupling to the transport system. This chain is Probable metal transport system ATP-binding protein TP_0035, found in Treponema pallidum (strain Nichols).